Reading from the N-terminus, the 323-residue chain is Lipoyl synthase (323 aa).

Residues 1 to 14 (MVTILDRTKPDDKR) show a composition bias toward basic and acidic residues. A disordered region spans residues 1 to 25 (MVTILDRTKPDDKRIRHPEKAHKPD). Cys61, Cys66, Cys72, Cys87, Cys91, Cys94, and Ser300 together coordinate [4Fe-4S] cluster. Residues 73–289 (WEKKHATFMI…EDIAYTKGFL (217 aa)) form the Radical SAM core domain.

The protein belongs to the radical SAM superfamily. Lipoyl synthase family. [4Fe-4S] cluster is required as a cofactor.

The protein localises to the cytoplasm. It catalyses the reaction [[Fe-S] cluster scaffold protein carrying a second [4Fe-4S](2+) cluster] + N(6)-octanoyl-L-lysyl-[protein] + 2 oxidized [2Fe-2S]-[ferredoxin] + 2 S-adenosyl-L-methionine + 4 H(+) = [[Fe-S] cluster scaffold protein] + N(6)-[(R)-dihydrolipoyl]-L-lysyl-[protein] + 4 Fe(3+) + 2 hydrogen sulfide + 2 5'-deoxyadenosine + 2 L-methionine + 2 reduced [2Fe-2S]-[ferredoxin]. It functions in the pathway protein modification; protein lipoylation via endogenous pathway; protein N(6)-(lipoyl)lysine from octanoyl-[acyl-carrier-protein]: step 2/2. Functionally, catalyzes the radical-mediated insertion of two sulfur atoms into the C-6 and C-8 positions of the octanoyl moiety bound to the lipoyl domains of lipoate-dependent enzymes, thereby converting the octanoylated domains into lipoylated derivatives. The sequence is that of Lipoyl synthase from Allorhizobium ampelinum (strain ATCC BAA-846 / DSM 112012 / S4) (Agrobacterium vitis (strain S4)).